Consider the following 271-residue polypeptide: ATP synthase subunit a (271 aa).

Helical transmembrane passes span 40–60, 100–120, 146–166, 220–240, and 242–262; these read TINI…LVLF, LIAP…LMDL, DVNV…FYSI, LIFI…LNVP, and AIFH…LTIV.

Belongs to the ATPase A chain family. As to quaternary structure, F-type ATPases have 2 components, CF(1) - the catalytic core - and CF(0) - the membrane proton channel. CF(1) has five subunits: alpha(3), beta(3), gamma(1), delta(1), epsilon(1). CF(0) has three main subunits: a(1), b(2) and c(9-12). The alpha and beta chains form an alternating ring which encloses part of the gamma chain. CF(1) is attached to CF(0) by a central stalk formed by the gamma and epsilon chains, while a peripheral stalk is formed by the delta and b chains.

The protein resides in the cell inner membrane. In terms of biological role, key component of the proton channel; it plays a direct role in the translocation of protons across the membrane. This chain is ATP synthase subunit a, found in Shigella dysenteriae serotype 1 (strain Sd197).